A 250-amino-acid chain; its full sequence is MSLTLKQADQASLSMQSLPKHVAIIMDGNRRWYRQHQAQCSIKSSSGHYYGAKVLPNIIESAFSLGIEVLTLFAFSTENFLRSAEEVAELFSLFHAQLDEQLPYLIENKIRLRCIGNLLALPPDLQQQIAKVASETQRHGMRELVLAINYGGKDELVRAFKKLHHDLVNKKISLDSVSEELIRLYLDTSEIPDPDLLIRTGGEMRVSNFLLWQIAYTELYVTDVLWPDFKPYHLLDAIKAYQHRSRRGGK.

Residue D27 is part of the active site. D27 contributes to the Mg(2+) binding site. Substrate-binding positions include 28-31 (GNRR), W32, H48, and 76-78 (STE). N79 serves as the catalytic Proton acceptor. Residues F80, R82, R199, and 205-207 (RVS) each bind substrate. Residue E218 coordinates Mg(2+).

The protein belongs to the UPP synthase family. Homodimer. Mg(2+) is required as a cofactor.

Catalyzes the condensation of isopentenyl diphosphate (IPP) with allylic pyrophosphates generating different type of terpenoids. This chain is Isoprenyl transferase, found in Chlamydia abortus (strain DSM 27085 / S26/3) (Chlamydophila abortus).